A 620-amino-acid chain; its full sequence is 1-deoxy-D-xylulose-5-phosphate synthase (620 aa).

Residues His80 and 121-123 contribute to the thiamine diphosphate site; that span reads GHS. Asp152 contacts Mg(2+). Thiamine diphosphate is bound by residues 153–154, Asn181, Tyr288, and Glu370; that span reads GA. Asn181 lines the Mg(2+) pocket.

It belongs to the transketolase family. DXPS subfamily. Homodimer. It depends on Mg(2+) as a cofactor. Requires thiamine diphosphate as cofactor.

The enzyme catalyses D-glyceraldehyde 3-phosphate + pyruvate + H(+) = 1-deoxy-D-xylulose 5-phosphate + CO2. It functions in the pathway metabolic intermediate biosynthesis; 1-deoxy-D-xylulose 5-phosphate biosynthesis; 1-deoxy-D-xylulose 5-phosphate from D-glyceraldehyde 3-phosphate and pyruvate: step 1/1. Catalyzes the acyloin condensation reaction between C atoms 2 and 3 of pyruvate and glyceraldehyde 3-phosphate to yield 1-deoxy-D-xylulose-5-phosphate (DXP). The protein is 1-deoxy-D-xylulose-5-phosphate synthase of Escherichia coli O127:H6 (strain E2348/69 / EPEC).